Reading from the N-terminus, the 517-residue chain is Xyloglucan galactosyltransferase XLT2 (517 aa).

The interval 1 to 31 is disordered; sequence MLPVSNPSSPEHLLKKSRTPDSTTSIDRKNS. Residues 1 to 49 lie on the Cytoplasmic side of the membrane; the sequence is MLPVSNPSSPEHLLKKSRTPDSTTSIDRKNSFNSLHSVGNRSSYIAASR. Polar residues predominate over residues 20 to 31; sequence PDSTTSIDRKNS. The helical; Signal-anchor for type II membrane protein transmembrane segment at 50–70 threads the bilayer; the sequence is SHCTWLILSLLSLQLILFLTL. Over 71-517 the chain is Lumenal; sequence RSIPFPHRHI…KEQEKWYKWR (447 aa). Asparagine 250, asparagine 288, asparagine 377, and asparagine 449 each carry an N-linked (GlcNAc...) asparagine glycan.

The protein belongs to the glycosyltransferase 47 family. In terms of assembly, interacts with CSLC4, FUT1, XXT2 and XXT5. In terms of tissue distribution, expressed in roots, hypocotyls, cotyledons, leaves, stems and flowers.

The protein localises to the golgi apparatus membrane. Functionally, functions in xyloglucan synthesis by adding side chains to the xylosylated glucan backbone. Involved in galactosylating hemicellulose xyloglucan (XyG) at the second position of the XXXG motif to form XLXG. Associates with other xyloglucan-synthesizing enzymes to form multiprotein complexes for xyloglucan synthesis in the Golgi. The sequence is that of Xyloglucan galactosyltransferase XLT2 from Arabidopsis thaliana (Mouse-ear cress).